A 489-amino-acid chain; its full sequence is Ubiquitin-like-specific protease ESD4 (489 aa).

A disordered region spans residues 43–66 (AMSEDSGKPASSNPTISRISRYPD). The segment covering 51–60 (PASSNPTISR) has biased composition (polar residues). Positions 200–223 (ASSLEAYRKLMQSAEKRNSKLEAL) form a coiled coil. Active-site residues include His380, Asp397, and Cys448.

It belongs to the peptidase C48 family. As to quaternary structure, interacts with NUA (via N-terminus). Interacts with KIN10. In terms of tissue distribution, expressed in seedlings, leaves, shoots, flowers and roots.

Its subcellular location is the nucleus membrane. It carries out the reaction Hydrolysis of the alpha-linked peptide bond in the sequence Gly-Gly-|-Ala-Thr-Tyr at the C-terminal end of the small ubiquitin-like modifier (SUMO) propeptide, Smt3, leading to the mature form of the protein. A second reaction involves the cleavage of an epsilon-linked peptide bond between the C-terminal glycine of the mature SUMO and the lysine epsilon-amino group of the target protein.. Its activity is regulated as follows. Inhibited by thiol reagent and N-ethylmaleimide, but not by ubiquitin aldehyde, pepstatin A or benzamidine HCl. Functionally, protease that catalyzes two essential functions in the SUMO pathway: processing of full-length SUMOs to their mature forms and deconjugation of SUMO from targeted proteins. Cleaves precursors of SUM1 and SUM2, but not of SUM3 or SUM5. Able to release SUM1 and SUM2 from conjugates, but unable to cleave SUM3. Acts predominantly as an isopeptidase, cleaving SUMO-conjugated proteins better than SUMO peptides. Plays an important role in the control of flowering time. In Arabidopsis thaliana (Mouse-ear cress), this protein is Ubiquitin-like-specific protease ESD4 (ESD4).